The chain runs to 1096 residues: Centrosome-associated zinc finger protein Cp190 (1096 aa).

Positions 1 to 209 are involved in microtubule and centrosome binding; that stretch reads MGEVKSVKVD…GDSSNVKQEP (209 aa). The BTB domain maps to 30–97; sequence CDLTLQFRDN…MYTGTLEFEL (68 aa). The disordered stretch occupies residues 126–308; the sequence is MENVNRQQRP…PQGTQTQLEH (183 aa). Composition is skewed to polar residues over residues 175–213 and 220–230; these read RANT…TSPF and YNNNKRPAQTS. Phosphoserine occurs at positions 197 and 211. A nuclear localization region spans residues 207–271; sequence QEPTSPFEQL…GDNDPEYDGG (65 aa). An involved in interaction with cliff region spans residues 210–245; the sequence is TSPFEQLRKGYNNNKRPAQTSLLSPPSKKPSLEEVK. Position 229 is a phosphothreonine (Thr229). Ser233 carries the phosphoserine modification. Over residues 239–252 the composition is skewed to basic and acidic residues; that stretch reads PSLEEVKEFAEQQR. Residues 245–468 are centrosomal targeting M domain involved in interaction with ZIPIC; the sequence is KEFAEQQRMR…IAQGAENTTG (224 aa). Residues 292 to 305 are compositionally biased toward low complexity; that stretch reads STSKQQSPQGTQTQ. Phosphoserine occurs at positions 298 and 319. Positions 309-390 are involved in interaction with cliff; that stretch reads GSTTIILKQD…KPPANQSSAT (82 aa). The interval 366–449 is disordered; that stretch reads NTPAAPTEKS…ANTAAAQKRR (84 aa). Residues 385-508 are centrosomal localization and interaction with microtubules; it reads NQSSATTSPH…KETIDPALCE (124 aa). The segment covering 412-445 has biased composition (low complexity); sequence AQQKAASSQQKSGTSQTTGNQGTGANPPANTAAA. C2H2-type zinc fingers lie at residues 538–561 and 567–590; these read AECA…NEVH and QQCI…KSYH. Thr603 carries the post-translational modification Phosphothreonine. Residues 608–625 are compositionally biased toward acidic residues; the sequence is LGSQDEEEEAEGDEEQEP. The disordered stretch occupies residues 608–630; it reads LGSQDEEEEAEGDEEQEPEQTGK. Ser610, Ser708, and Ser723 each carry phosphoserine. The interval 710 to 733 is disordered; sequence PEAEHVKQETDEKSLAGTEEEYDD. A compositionally biased stretch (basic and acidic residues) spans 711–723; it reads EAEHVKQETDEKS. Residue Thr727 is modified to Phosphothreonine. Residues Ser745, Ser748, Ser757, and Ser760 each carry the phosphoserine modification. The disordered stretch occupies residues 770–927; sequence LIAESEEQSN…EDSPIPHSDS (158 aa). Residues 777–799 show a composition bias toward basic and acidic residues; that stretch reads QSNKEPKSDKPRDDISEKLKELT. Positions 802–812 are enriched in acidic residues; it reads WTEDENDDDVD. Residue Thr817 is modified to Phosphothreonine. Basic and acidic residues-rich tracts occupy residues 825 to 834, 849 to 861, 882 to 907, and 914 to 927; these read ANKDPEPTVH, KGPE…KASE, EKMD…KEAE, and EFIK…HSDS. Residues Ser920, Ser925, and Ser927 each carry the phosphoserine modification. Thr936 carries the post-translational modification Phosphothreonine. Ser938 carries the phosphoserine modification. 2 stretches are compositionally biased toward basic and acidic residues: residues 960 to 973 and 1011 to 1035; these read IAEA…KDIV and AAEK…EDKP. Residues 960–1096 form a disordered region; the sequence is IAEAEKPDQE…GVSAAAKEEL (137 aa). Residues Ser1071 and Ser1074 each carry the phosphoserine modification. Over residues 1076–1086 the composition is skewed to acidic residues; that stretch reads WGDDDEDEDEN.

Homodimerizes via the N-terminal BTB domain. Component of the gypsy chromatin insulator complex, composed of Cp190, mod(mdg4) and su(Hw). The gypsy chromatin insulator complex interacts with Topors via mod(mdg4) and su(Hw). Interacts with Cp60. Interacts with inv. Interacts with Nup98. Interacts (via BTB domain) with pita (via region between the ZAD domain and the first zinc finger domain); the interaction is direct. Interacts with ZIPIC (via region between the ZAD domain and the first zinc finger domain); the interaction is direct. Interacts (via regions between the BTB domain and first zinc finger domain) with cliff (via regions flanking MADF domain 1); the interaction is probably direct. Associates (via N-terminus) with microtubules; the interaction is direct, is enhanced by dimerization and involves multiple regions within the N-terminus. Microtubule association is enriched at growing plus ends. In terms of tissue distribution, expressed in spermatids but not in mature spermatozoa. Localizes within the spermatids to a sheath of microtubules around the nucleus and to microtubules within the tail.

It localises to the nucleus. It is found in the cytoplasm. Its subcellular location is the cytoskeleton. The protein localises to the microtubule organizing center. The protein resides in the centrosome. It localises to the chromosome. It is found in the nucleoplasm. Functionally, plays a central role in chromatin domain organization and boundary function through recruitment by a range of insulator DNA-binding proteins, including ZIPIC, pita, CTCF, su(Hw), cliff and others. Together with pita and CTCF cooperatively binds to and regulates the activity of the Miscadastral pigmentation (MCP) insulator. Cooperatively recruited to the front-ultraabdominal (Fub) boundary by pita, su(Hw) and cliff. Recruitment of Cp190 together with Chro/chromator induces chromatin decondensation. Component of the gypsy chromatin insulator complex which is required for the function of the gypsy chromatin insulator and other endogenous chromatin insulators. Chromatin insulators are regulatory elements that establish independent domains of transcriptional activity within eukaryotic genomes. Insulators have two defining properties; they can block the communication between an enhancer and a promoter when placed between them and can also buffer transgenes from position effect variegation (PEV). Insulators are proposed to structure the chromatin fiber into independent domains of differing transcriptional potential by promoting the formation of distinct chromatin loops to form topologically associating domains (TADs). This chromatin looping may involve the formation of insulator bodies, where homotypic interactions between individual subunits of the insulator complex could promote the clustering of widely spaced insulators at the nuclear periphery. Within the gypsy insulator complex, this protein may directly bind to insulator DNA at sites distinct from those recognized by su(Hw). Required during embryogenesis for axial expansion, an actin/myosin dependent process that distributes the dividing nuclei along the anterior-posterior axis of the syncytial embryo. Associates with centrosomes and interphase microtubules during mitosis, and recruits CP60; may have a role in maintaining centrosome and spindle integrity. The sequence is that of Centrosome-associated zinc finger protein Cp190 from Drosophila melanogaster (Fruit fly).